The primary structure comprises 449 residues: Allantoinase (449 aa).

Zn(2+) contacts are provided by H59, H61, K146, H182, H238, and D311. Residue K146 is modified to N6-carboxylysine.

Belongs to the metallo-dependent hydrolases superfamily. Allantoinase family. In terms of assembly, homotetramer. It depends on Zn(2+) as a cofactor. In terms of processing, carboxylation allows a single lysine to coordinate two zinc ions.

The catalysed reaction is (S)-allantoin + H2O = allantoate + H(+). Its pathway is nitrogen metabolism; (S)-allantoin degradation; allantoate from (S)-allantoin: step 1/1. Catalyzes the conversion of allantoin (5-ureidohydantoin) to allantoic acid by hydrolytic cleavage of the five-member hydantoin ring. The chain is Allantoinase from Deinococcus geothermalis (strain DSM 11300 / CIP 105573 / AG-3a).